Reading from the N-terminus, the 250-residue chain is MPLWELWFFLLALFLAWLTPPGNGNEGSMAGSCPCNRRISSHSPPTDHDMRHLRKYLNHYQHCTSYVRFQLPRGSVCGGSSDQWVLKLMGCFDRGECGRAHARTVAHQQHLAPQNTRVPELPERAPPDSSTPAQTNLPSTLQPTQKPTLPEGMPSLAKKLIPTSETDTSTVGHSLGAKSEARENQEQLGKNVGATAGTSALVPVLSLLVIIFLLTGVLLYVMCKKRQEQSRQYPPDPQLHYVPVASNINT.

A signal peptide spans 1-24; that stretch reads MPLWELWFFLLALFLAWLTPPGNG. Residues 25 to 200 lie on the Extracellular side of the membrane; that stretch reads NEGSMAGSCP…NVGATAGTSA (176 aa). 2 disulfides stabilise this stretch: C33–C63 and C35–C77. The interval 105-186 is disordered; that stretch reads VAHQQHLAPQ…AKSEARENQE (82 aa). Composition is skewed to polar residues over residues 128–147 and 163–172; these read DSSTPAQTNLPSTLQPTQKP and TSETDTSTVG. A helical membrane pass occupies residues 201 to 221; sequence LVPVLSLLVIIFLLTGVLLYV. Topologically, residues 222–250 are cytoplasmic; that stretch reads MCKKRQEQSRQYPPDPQLHYVPVASNINT.

This sequence belongs to the intercrine alpha (chemokine CxC) family. Post-translationally, glycosylated.

It is found in the membrane. Induces a strong chemotactic response. Induces calcium mobilization. Binds to CXCR6/Bonzo. Also acts as a scavenger receptor on macrophages, which specifically binds to OxLDL (oxidized low density lipoprotein), suggesting that it may be involved in pathophysiology such as atherogenesis. The chain is C-X-C motif chemokine 16 (CXCL16) from Sus scrofa (Pig).